The sequence spans 175 residues: Glucagon family neuropeptides (175 aa).

A signal peptide spans 1-23 (MSGNVYKTLLTLLVYGLIMHCNV). The propeptide occupies 24–80 (YCSPDRWTPVPGAKLEEEVYDEDGNTLQDFALRAGAPGGGGPRPRWGRCTALYYPPG). Residues 149-157 (VKKYLAAVL) are important for receptor binding. Position 157 is a leucine amide (Leu-157). Lys-168 bears the Lysine amide mark. Positions 172–175 (VAYL) are excised as a propeptide.

The protein belongs to the glucagon family.

The protein resides in the secreted. Primary role of GRF is to release GH from the pituitary. Functionally, PACAP is a neuropeptide involved in diverse array of physiological processes through activating the PACAP subfamily of class B1 G protein-coupled receptors: VIP receptor 1 (VIPR1), VIP receptor 2 (VIPR2), and PACAP type I receptor (ADCYAP1R1). Exerts neuroprotective and general cytoprotective effects due to anti-apoptotic, anti-inflammatory, and antioxidant actions. Promotes neuron projection development through the RAPGEF2/Rap1/B-Raf/ERK pathway. In chromaffin cells, induces long-lasting increase of intracellular calcium concentrations and neuroendocrine secretion. Involved in the control of glucose homeostasis, induces insulin secretion by pancreatic beta cells. PACAP exists in two bioactive forms from proteolysis of the same precursor protein, PACAP27 and PACAP38, which differ by eleven amino acid residues in the C-terminus. This is Glucagon family neuropeptides (ADCYAP1) from Gallus gallus (Chicken).